A 373-amino-acid polypeptide reads, in one-letter code: Histidinol-phosphate aminotransferase (373 aa).

At Lys233 the chain carries N6-(pyridoxal phosphate)lysine.

Belongs to the class-II pyridoxal-phosphate-dependent aminotransferase family. Histidinol-phosphate aminotransferase subfamily. Homodimer. Pyridoxal 5'-phosphate serves as cofactor.

It catalyses the reaction L-histidinol phosphate + 2-oxoglutarate = 3-(imidazol-4-yl)-2-oxopropyl phosphate + L-glutamate. The protein operates within amino-acid biosynthesis; L-histidine biosynthesis; L-histidine from 5-phospho-alpha-D-ribose 1-diphosphate: step 7/9. The chain is Histidinol-phosphate aminotransferase from Nitratidesulfovibrio vulgaris (strain DP4) (Desulfovibrio vulgaris).